A 335-amino-acid chain; its full sequence is Large ribosomal subunit protein uL3 (335 aa).

Belongs to the universal ribosomal protein uL3 family. As to quaternary structure, part of the 50S ribosomal subunit. Forms a cluster with proteins L14 and L24e.

One of the primary rRNA binding proteins, it binds directly near the 3'-end of the 23S rRNA, where it nucleates assembly of the 50S subunit. The polypeptide is Large ribosomal subunit protein uL3 (Methanocaldococcus jannaschii (strain ATCC 43067 / DSM 2661 / JAL-1 / JCM 10045 / NBRC 100440) (Methanococcus jannaschii)).